The following is a 763-amino-acid chain: Transferrin receptor protein 1 (763 aa).

The Cytoplasmic portion of the chain corresponds to 1–67; it reads MMDQARSAFS…KPKRFNGRLC (67 aa). The tract at residues 1 to 67 is mediates interaction with SH3BP4; sequence MMDQARSAFS…KPKRFNGRLC (67 aa). 2 positions are modified to phosphoserine: Ser10 and Ser19. Tyr20 is modified (phosphotyrosine). The Endocytosis signal signature appears at 20–23; the sequence is YTRF. Phosphothreonine is present on Thr21. At Ser24 the chain carries Phosphoserine. A Stop-transfer sequence motif is present at residues 58–61; it reads KPKR. Cys67 carries S-palmitoyl cysteine lipidation. A helical; Signal-anchor for type II membrane protein membrane pass occupies residues 68–88; the sequence is FAAIALVIFFLIGFMSGYLGY. Over 89 to 763 the chain is Extracellular; it reads CKRVEQKEEC…GDIWNIDNEF (675 aa). Thr104 carries an O-linked (GalNAc...) threonine glycan. Residues 225–315 form the PA domain; the sequence is SKPTEVSGKL…GTGDPYTPGF (91 aa). N-linked (GlcNAc...) asparagine glycosylation is found at Asn253 and Asn319. The interval 572-763 is ligand-binding; it reads RLDTYEALTQ…GDIWNIDNEF (192 aa). The short motif at 649 to 651 is the Cell attachment site element; the sequence is RGD. Asn725 and Asn730 each carry an N-linked (GlcNAc...) asparagine glycan.

This sequence belongs to the peptidase M28 family. M28B subfamily. As to quaternary structure, homodimer; disulfide-linked. Binds one transferrin molecule per subunit. Interacts with SH3BP4. Interacts with STEAP3; facilitates TFRC endocytosis in erythroid precursor cells. In terms of processing, stearoylated by ZDHHC6 which inhibits TFRC-mediated activation of the JNK pathway and promotes mitochondrial fragmentation. Stearoylation does not affect iron uptake. Post-translationally, N- and O-glycosylated, phosphorylated and palmitoylated.

It localises to the cell membrane. The protein localises to the melanosome. Functionally, cellular uptake of iron occurs via receptor-mediated endocytosis of ligand-occupied transferrin receptor into specialized endosomes. Endosomal acidification leads to iron release. The apotransferrin-receptor complex is then recycled to the cell surface with a return to neutral pH and the concomitant loss of affinity of apotransferrin for its receptor. Transferrin receptor is necessary for development of erythrocytes and the nervous system. Upon stimulation, positively regulates T and B cell proliferation through iron uptake. Acts as a lipid sensor that regulates mitochondrial fusion by regulating activation of the JNK pathway. When dietary levels of stearate (C18:0) are low, promotes activation of the JNK pathway, resulting in HUWE1-mediated ubiquitination and subsequent degradation of the mitofusin MFN2 and inhibition of mitochondrial fusion. When dietary levels of stearate (C18:0) are high, TFRC stearoylation inhibits activation of the JNK pathway and thus degradation of the mitofusin MFN2. Mediates uptake of NICOL1 into fibroblasts where it may regulate extracellular matrix production. The protein is Transferrin receptor protein 1 (Tfrc) of Mus musculus (Mouse).